The sequence spans 451 residues: MKKHLHEIKMLLKITIPIFLAQISQTSMSLINSIMIGHLKENNIAAISVGISIWSPIILFGHGLLLSLVPTVSRIHGSGKINKIPEQINNAYWLATLISLVIMIVLWNSDVIIHTISQVNPIIEQESIKYIRILLWSTPGYLYFQVIQNQCEGLLKPKPAMVIGLIGLLFNIVVSYTLISEKFHCFNYGSTGCGISAIIVYWFMFIAMKKITKNDILINYNIKNKNISNLEMYLPNYKIIWNLFKMGFPIALSLFCEITLFTLITLLIASMETFQIIAHQIALNISSTIFILPLSIATAASIRLGFYLGKKSFSKISTIILSSQIIGLIISTTISTFIILFHYQIITLYTKNANIIKLTKQMLFITASYQIFDFFQIIGNGILRSYKDTNIIFIITCTSYWIVGFPFGYFLALTNYIVPHMGAIGFWYGILIALITSSIMILFRIYILQKK.

A run of 10 helical transmembrane segments spans residues 44–66, 92–109, 130–147, 162–179, 186–208, 247–269, 282–304, 319–341, 391–413, and 423–445; these read IAAISVGISIWSPIILFGHGLLL, YWLATLISLVIMIVLWNS, YIRILLWSTPGYLYFQVI, VIGLIGLLFNIVVSYTLI, FNYGSTGCGISAIIVYWFMFIAM, GFPIALSLFCEITLFTLITLLIA, ALNISSTIFILPLSIATAASIRL, IILSSQIIGLIISTTISTFIILF, IIFIITCTSYWIVGFPFGYFLAL, and AIGFWYGILIALITSSIMILFRI.

This sequence belongs to the multi antimicrobial extrusion (MATE) (TC 2.A.66.1) family.

The protein resides in the cell membrane. In terms of biological role, multidrug efflux pump. The protein is Probable multidrug resistance protein NorM (norM) of Buchnera aphidicola subsp. Baizongia pistaciae (strain Bp).